Reading from the N-terminus, the 175-residue chain is MEDDKLIVRIISKEGEIIRLTEEGERFLSSCLSSLKDAILSLHSIEIKGNIVSGLGEGKIFLSMEYYKSQINKIMGFDPFPGTLNIVIYDKASLENRLLLDSSPSLMVPEYKQKDRVLGAVKLYPAAINKLTPAAVVIPLRTTHPKSVIEIISPFHLREKLNLKDGDEVTIEVYV.

Position 54–59 (54–59 (GLGEGK)) interacts with CDP. 2 residues coordinate Mg(2+): Thr83 and Asn85. The FMN site is built by Thr142 and Glu150. A CDP-binding site is contributed by 155–158 (FHLR).

It belongs to the archaeal riboflavin kinase family. Mg(2+) serves as cofactor.

The enzyme catalyses riboflavin + CTP = CDP + FMN + H(+). The protein operates within cofactor biosynthesis; FMN biosynthesis; FMN from riboflavin (CTP route): step 1/1. Its function is as follows. Catalyzes the CTP-dependent phosphorylation of riboflavin (vitamin B2) to form flavin mononucleotide (FMN). This Saccharolobus solfataricus (strain ATCC 35092 / DSM 1617 / JCM 11322 / P2) (Sulfolobus solfataricus) protein is Riboflavin kinase.